We begin with the raw amino-acid sequence, 345 residues long: Putative membrane protein ORF59 (345 aa).

The next 4 helical transmembrane spans lie at 46 to 63 (LVFA…MMLI), 101 to 118 (IVFV…LVFL), 147 to 165 (IFGI…FSIL), and 265 to 286 (VVPV…WMVI).

The protein resides in the membrane. This chain is Putative membrane protein ORF59 (ORF59), found in Ictalurid herpesvirus 1 (strain Auburn) (IcHV-1).